The chain runs to 174 residues: Cuticle protein 1 (174 aa).

The signal sequence occupies residues 1–18; the sequence is MRFLIAFVAILGYASASA.

The protein resides in the secreted. This chain is Cuticle protein 1, found in Lonomia obliqua (Moth).